The chain runs to 147 residues: MRTYSPKPGDITRQWYVIDAQDVVLGRLATTAANILRGKHKPIYAPHVDAGDFVIIINADKVHLSGNKKTQKLAYRHSGYPGGLRSVRYDELLAKNPEKAVEKAIKGMIPKNTLGRQVLSKLKVYSGDQHPHAAQQPVPFEITQVAQ.

This sequence belongs to the universal ribosomal protein uL13 family. Part of the 50S ribosomal subunit.

This protein is one of the early assembly proteins of the 50S ribosomal subunit, although it is not seen to bind rRNA by itself. It is important during the early stages of 50S assembly. The protein is Large ribosomal subunit protein uL13 of Streptomyces avermitilis (strain ATCC 31267 / DSM 46492 / JCM 5070 / NBRC 14893 / NCIMB 12804 / NRRL 8165 / MA-4680).